An 88-amino-acid chain; its full sequence is Small ribosomal subunit protein uS15 (88 aa).

It belongs to the universal ribosomal protein uS15 family. Part of the 30S ribosomal subunit. Forms a bridge to the 50S subunit in the 70S ribosome, contacting the 23S rRNA.

Functionally, one of the primary rRNA binding proteins, it binds directly to 16S rRNA where it helps nucleate assembly of the platform of the 30S subunit by binding and bridging several RNA helices of the 16S rRNA. Forms an intersubunit bridge (bridge B4) with the 23S rRNA of the 50S subunit in the ribosome. This chain is Small ribosomal subunit protein uS15, found in Borreliella burgdorferi (strain ATCC 35210 / DSM 4680 / CIP 102532 / B31) (Borrelia burgdorferi).